The primary structure comprises 585 residues: Probable long-chain-fatty-acid--AMP ligase FadD30 (585 aa).

This sequence belongs to the ATP-dependent AMP-binding enzyme family.

It functions in the pathway lipid metabolism; fatty acid biosynthesis. In terms of biological role, catalyzes the activation of long-chain fatty acids as acyl-adenylates (acyl-AMP), which are then transferred to a multifunctional polyketide synthase (PKS) for further chain extension. The polypeptide is Probable long-chain-fatty-acid--AMP ligase FadD30 (fadD30) (Mycobacterium tuberculosis (strain CDC 1551 / Oshkosh)).